The primary structure comprises 307 residues: Aspartate carbamoyltransferase catalytic subunit (307 aa).

Carbamoyl phosphate-binding residues include Arg-56 and Thr-57. Lys-84 serves as a coordination point for L-aspartate. Carbamoyl phosphate contacts are provided by Arg-106, His-136, and Gln-139. L-aspartate-binding residues include Arg-169 and Arg-221. Ala-262 and Pro-263 together coordinate carbamoyl phosphate.

This sequence belongs to the aspartate/ornithine carbamoyltransferase superfamily. ATCase family. Heterododecamer (2C3:3R2) of six catalytic PyrB chains organized as two trimers (C3), and six regulatory PyrI chains organized as three dimers (R2).

It catalyses the reaction carbamoyl phosphate + L-aspartate = N-carbamoyl-L-aspartate + phosphate + H(+). It participates in pyrimidine metabolism; UMP biosynthesis via de novo pathway; (S)-dihydroorotate from bicarbonate: step 2/3. Catalyzes the condensation of carbamoyl phosphate and aspartate to form carbamoyl aspartate and inorganic phosphate, the committed step in the de novo pyrimidine nucleotide biosynthesis pathway. This Streptococcus pneumoniae (strain JJA) protein is Aspartate carbamoyltransferase catalytic subunit.